The following is a 207-amino-acid chain: MTSRKKVLLKVIILGDSGVGKTSLMNQYVNKKFSNQYKATIGADFLTKEVMVDDRLVTMQIWDTAGQERFQSLGVAFYRGADCCVLVFDVTAPNTFKTLDSWRDEFLIQASPRDPENFPFVVLGNKIDLENRQVATKRAQAWCYSKNNIPYFETSAKEAINVEQAFQTIVRNALKQETEVELYNEFPEPIKLDKNDRTKPSAEGCSC.

Thr-2 is modified (N-acetylthreonine). Residues Ser-17, Gly-18, Val-19, Gly-20, Lys-21, Thr-22, Ser-23, Ser-34, Asn-35, Tyr-37, and Thr-40 each coordinate GTP. A Mg(2+)-binding site is contributed by Thr-22. The short motif at Tyr-28–Ile-41 is the Switch 1 element. Residues Thr-40 and Asp-63 each coordinate Mg(2+). Gly-66 serves as a coordination point for GTP. The short motif at Gln-67–Asp-82 is the Switch 2 element. Ser-72 carries the phosphoserine modification. GTP contacts are provided by Asn-125, Lys-126, Asp-128, Ala-156, and Lys-157. Glycyl lysine isopeptide (Lys-Gly) (interchain with G-Cter in ubiquitin) cross-links involve residues Lys-191 and Lys-194. S-geranylgeranyl cysteine attachment occurs at residues Cys-205 and Cys-207. Cys-207 is modified (cysteine methyl ester).

Belongs to the small GTPase superfamily. Rab family. As to quaternary structure, interacts with NTRK1/TRKA. Interacts with RILP. Interacts with PSMA7. Interacts with RNF115. Interacts with FYCO1. Interacts with the PIK3C3/VPS34-PIK3R4 complex. The GTP-bound form interacts with OSBPL1A. The GTP-bound form interacts with RAC1. Interacts with CLN3. Interacts with CHM, the substrate-binding subunit of the Rab geranylgeranyltransferase complex. Interacts with C9orf72. Does not interact with HPS4 and the BLOC-3 complex (heterodimer of HPS1 and HPS4). Interacts with CLN5. Interacts with PLEKHM1 (via N- and C-terminus). Interacts with PRPH; the interaction is direct. Interacts with VPS13A. The GDP-bound form interacts with RIMOC1. Interacts with the MON1A-CCZ1B complex and this interaction is enhanced in the presence of RIMOC1. Interacts with VPS39 and VPS41. Forms a ternary complex with LAMP2 and RUFY4; the interaction with LAMP2 is mediated by RUFY4 (via RUN and coiled coil domains). It depends on Mg(2+) as a cofactor. Deubiquitination at Lys-191 and Lys-194 by USP32. Post-translationally, phosphorylated at Ser-72 by LRRK1; phosphorylation is dependent on protein kinase C (PKC) activation of LRRK1. In terms of processing, prenylated. Prenylation is required for association with cellular membranes.

Its subcellular location is the cytoplasmic vesicle. It is found in the phagosome membrane. The protein localises to the late endosome membrane. It localises to the lysosome membrane. The protein resides in the melanosome membrane. Its subcellular location is the autophagosome membrane. It is found in the lipid droplet. The protein localises to the endosome membrane. It localises to the mitochondrion membrane. It carries out the reaction GTP + H2O = GDP + phosphate + H(+). With respect to regulation, regulated by guanine nucleotide exchange factors (GEFs) which promote the exchange of bound GDP for free GTP. Regulated by GTPase activating proteins (GAPs) which increase the GTP hydrolysis activity. Inhibited by GDP dissociation inhibitors (GDIs). The small GTPases Rab are key regulators of intracellular membrane trafficking, from the formation of transport vesicles to their fusion with membranes. Rabs cycle between an inactive GDP-bound form and an active GTP-bound form that is able to recruit to membranes different sets of downstream effectors directly responsible for vesicle formation, movement, tethering and fusion. In its active state, RAB7A binds to a variety of effector proteins playing a key role in the regulation of endo-lysosomal trafficking. Governs early-to-late endosomal maturation, microtubule minus-end as well as plus-end directed endosomal migration and positioning, and endosome-lysosome transport through different protein-protein interaction cascades. Also plays a central role in growth-factor-mediated cell signaling, nutrient-transporter-mediated nutrient uptake, neurotrophin transport in the axons of neurons and lipid metabolism. Also involved in regulation of some specialized endosomal membrane trafficking, such as maturation of melanosomes, pathogen-induced phagosomes (or vacuoles) and autophagosomes. Plays a role in the maturation and acidification of phagosomes that engulf pathogens, such as S.aureus and Mycobacteria. Plays a role in the fusion of phagosomes with lysosomes. In concert with RAC1, plays a role in regulating the formation of RBs (ruffled borders) in osteoclasts. Controls the endosomal trafficking and neurite outgrowth signaling of NTRK1/TRKA. Regulates the endocytic trafficking of the EGF-EGFR complex by regulating its lysosomal degradation. Involved in the ADRB2-stimulated lipolysis through lipophagy, a cytosolic lipase-independent autophagic pathway. Required for the exosomal release of SDCBP, CD63 and syndecan. Required for vesicular trafficking and cell surface expression of ACE2. May play a role in PRPH neuronal intermediate filament assembly. This Bos taurus (Bovine) protein is Ras-related protein Rab-7a (RAB7A).